The chain runs to 268 residues: 1,4-dihydroxy-2-naphthoyl-CoA synthase (268 aa).

Residues Val30–Leu31, Val70–Gln74, Tyr114–Gly118, Ser140, and Ser146 contribute to the substrate site. Residue Gln139 to Gly141 coordinates hydrogencarbonate.

Belongs to the enoyl-CoA hydratase/isomerase family. MenB subfamily. It depends on hydrogencarbonate as a cofactor.

It localises to the plastid. Its subcellular location is the chloroplast. The catalysed reaction is 2-succinylbenzoyl-CoA + H(+) = 1,4-dihydroxy-2-naphthoyl-CoA + H2O. The protein operates within quinol/quinone metabolism; 1,4-dihydroxy-2-naphthoate biosynthesis; 1,4-dihydroxy-2-naphthoate from chorismate: step 6/7. It participates in quinol/quinone metabolism; menaquinone biosynthesis. Its function is as follows. Converts o-succinylbenzoyl-CoA (OSB-CoA) to 1,4-dihydroxy-2-naphthoyl-CoA (DHNA-CoA). The polypeptide is 1,4-dihydroxy-2-naphthoyl-CoA synthase (menB) (Cyanidium caldarium (Red alga)).